Here is a 157-residue protein sequence, read N- to C-terminus: Transcription elongation factor GreA (157 aa).

Residues 10-76 (THEGKQKLEQ…TLENMIRNAK (67 aa)) adopt a coiled-coil conformation.

The protein belongs to the GreA/GreB family.

Functionally, necessary for efficient RNA polymerase transcription elongation past template-encoded arresting sites. The arresting sites in DNA have the property of trapping a certain fraction of elongating RNA polymerases that pass through, resulting in locked ternary complexes. Cleavage of the nascent transcript by cleavage factors such as GreA or GreB allows the resumption of elongation from the new 3'terminus. GreA releases sequences of 2 to 3 nucleotides. This is Transcription elongation factor GreA from Bacillus velezensis (strain DSM 23117 / BGSC 10A6 / LMG 26770 / FZB42) (Bacillus amyloliquefaciens subsp. plantarum).